A 166-amino-acid chain; its full sequence is Endoribonuclease YbeY (166 aa).

Zn(2+) is bound by residues His111, His115, and His121. Residues Glu140–Glu166 form a disordered region. A compositionally biased stretch (basic and acidic residues) spans Asp154–Glu166.

This sequence belongs to the endoribonuclease YbeY family. Zn(2+) serves as cofactor.

It localises to the cytoplasm. Functionally, single strand-specific metallo-endoribonuclease involved in late-stage 70S ribosome quality control and in maturation of the 3' terminus of the 16S rRNA. The sequence is that of Endoribonuclease YbeY from Pseudomonas syringae pv. syringae (strain B728a).